Consider the following 158-residue polypeptide: Ribonuclease H (158 aa).

The region spanning alanine 9 to glutamine 155 is the RNase H type-1 domain. Positions 18, 58, 80, and 147 each coordinate Mg(2+).

It belongs to the RNase H family. Monomer. It depends on Mg(2+) as a cofactor.

The protein localises to the cytoplasm. It carries out the reaction Endonucleolytic cleavage to 5'-phosphomonoester.. Endonuclease that specifically degrades the RNA of RNA-DNA hybrids. This Rhodopirellula baltica (strain DSM 10527 / NCIMB 13988 / SH1) protein is Ribonuclease H.